The sequence spans 54 residues: Large ribosomal subunit protein bL32 (54 aa).

Belongs to the bacterial ribosomal protein bL32 family.

The chain is Large ribosomal subunit protein bL32 from Buchnera aphidicola subsp. Baizongia pistaciae (strain Bp).